The primary structure comprises 471 residues: Variant surface glycoprotein WRATAT A (471 aa).

Positions 1–18 are cleaved as a signal peptide; sequence MSVLFLLLAITRTASVKA. 2 N-linked (GlcNAc...) asparagine glycosylation sites follow: Asn-61 and Asn-133. The segment at 373–457 is disordered; the sequence is QEQTLATTGT…ANTTGSSNSF (85 aa). Over residues 379–392 the composition is skewed to low complexity; the sequence is TTGTKSSSPQSTQQ. Intrachain disulfides connect Cys-401-Cys-414 and Cys-410-Cys-427. Basic and acidic residues predominate over residues 401–447; that stretch reads CNDKAKETECNSPCKWDKEEKDEKKRCKLSEEGKQAEKENQEGKDGK. Positions 448-457 are enriched in polar residues; the sequence is ANTTGSSNSF. The N-linked (GlcNAc...) asparagine glycan is linked to Asn-449. Ser-454 is lipidated: GPI-anchor amidated serine. Residues 455–471 constitute a propeptide, removed in mature form; it reads NSFVIKTSPLLLAVLLL.

Its subcellular location is the cell membrane. In terms of biological role, VSG forms a coat on the surface of the parasite. The trypanosome evades the immune response of the host by expressing a series of antigenically distinct VSGs from an estimated 1000 VSG genes. This Trypanosoma brucei rhodesiense protein is Variant surface glycoprotein WRATAT A.